Reading from the N-terminus, the 259-residue chain is Snake venom serine protease homolog rhinocerase 2 (259 aa).

An N-terminal signal peptide occupies residues Val1–Ala17. A propeptide spanning residues Gln18–Leu23 is cleaved from the precursor. In terms of domain architecture, Peptidase S1 spans Val24–Ala250. Intrachain disulfides connect Cys30–Cys164, Cys51–Cys67, Cys99–Cys257, Cys143–Cys211, Cys175–Cys190, and Cys201–Cys226. The N-linked (GlcNAc...) asparagine glycan is linked to Asn252.

This sequence belongs to the peptidase S1 family. Snake venom subfamily. In terms of tissue distribution, expressed by the venom gland.

The protein resides in the secreted. Functionally, snake venom serine protease homolog that may act in the hemostasis system of the prey. The sequence is that of Snake venom serine protease homolog rhinocerase 2 from Bitis rhinoceros (West African gaboon viper).